The sequence spans 118 residues: Elongin-B (118 aa).

N-acetylmethionine is present on Met1. In terms of domain architecture, Ubiquitin-like spans Met1–Phe79. Residue Thr84 is modified to Phosphothreonine. Residues Glu91 to Gln118 are disordered. Phosphoserine occurs at positions 108 and 111. Positions Ser108–Gln118 are enriched in polar residues.

It belongs to the Elongin B family. In terms of assembly, heterotrimer of an A (ELOA, ELOA2 or ELOA3P), ELOB and ELOC subunit. The elongin BC complex interacts with EPOP; leading to recruit the elongin BC complex to Polycomb group (PcG) target genes, thereby restricting excessive activity of the PRC2/EED-EZH2 complex. Component of multiple cullin-RING E3 ubiquitin-protein ligase complexes composed of Elongin BC (ELOB and ELOC), a cullin (either CUL2 or CUL5), a catalytic subunit (either RBX1 or RNF7/RBX2), as well as a substrate adapter protein that can be either ASB2, ASB9, ASB11, KLHDC2, KLHDC3, KLHDC10, APPBP2, FEM1A, FEM1B, FEM1C, LRR1, PCMTD1, SOCS1, SOCS2, SOCS5, SPSB1, SPSB3, ELOA, VHL, WSB1 or RAB40C. As part of the Elongin BC E3 ubiquitin ligase complex; interacts with NRBP1. May also interact with DCUN1D1, DCUN1D2, DCUN1D3 and DCUN1D5. May form oligomers as a KLHDC2/KLHDC3-ELOB-ELOC complex; this interaction is autoinhibitory for the E3 ligase complex as the substrate-binding site of KLHDC2/KLHDC3 is blocked in the oligomer.

Its subcellular location is the nucleus. It participates in protein modification; protein ubiquitination. SIII, also known as elongin, is a general transcription elongation factor that increases the RNA polymerase II transcription elongation past template-encoded arresting sites. Subunit A is transcriptionally active and its transcription activity is strongly enhanced by binding to the dimeric complex of the SIII regulatory subunits B and C (elongin BC complex). In embryonic stem cells, the elongin BC complex is recruited by EPOP to Polycomb group (PcG) target genes in order generate genomic region that display both active and repressive chromatin properties, an important feature of pluripotent stem cells. Functionally, core component of multiple cullin-2 and cullin-5-RING E3 ubiquitin-protein ligase complexes (ECS complexes), which mediate the ubiquitination of target proteins. By binding to BC-box motifs it seems to link target recruitment subunits, like VHL and members of the SOCS box family, to Cullin/RBX1 modules that activate E2 ubiquitination enzymes. Component the von Hippel-Lindau ubiquitination complex CBC(VHL). A number of ECS complexes (containing either KLHDC2, KLHDC3, KLHDC10, APPBP2, FEM1A, FEM1B or FEM1C as substrate-recognition component) are part of the DesCEND (destruction via C-end degrons) pathway, which recognizes a C-degron located at the extreme C terminus of target proteins, leading to their ubiquitination and degradation. The ECS(ASB9) complex mediates ubiquitination and degradation of CKB. As part of a multisubunit ubiquitin ligase complex, polyubiquitinates monoubiquitinated POLR2A. ECS(LRR1) ubiquitinates MCM7 and promotes CMG replisome disassembly by VCP and chromatin extraction during S-phase. As part of the ECS(RAB40C) complex, mediates ANKRD28 ubiquitination and degradation, thereby inhibiting protein phosphatase 6 (PP6) complex activity and focal adhesion assembly during cell migration. This chain is Elongin-B, found in Mus musculus (Mouse).